Reading from the N-terminus, the 240-residue chain is Ubiquinone biosynthesis O-methyltransferase (240 aa).

S-adenosyl-L-methionine contacts are provided by Arg-44, Gly-64, Asp-85, and Met-129.

Belongs to the methyltransferase superfamily. UbiG/COQ3 family.

It catalyses the reaction a 3-demethylubiquinol + S-adenosyl-L-methionine = a ubiquinol + S-adenosyl-L-homocysteine + H(+). The enzyme catalyses a 3-(all-trans-polyprenyl)benzene-1,2-diol + S-adenosyl-L-methionine = a 2-methoxy-6-(all-trans-polyprenyl)phenol + S-adenosyl-L-homocysteine + H(+). Its pathway is cofactor biosynthesis; ubiquinone biosynthesis. In terms of biological role, O-methyltransferase that catalyzes the 2 O-methylation steps in the ubiquinone biosynthetic pathway. The sequence is that of Ubiquinone biosynthesis O-methyltransferase from Escherichia coli O81 (strain ED1a).